The sequence spans 235 residues: Coiled-coil domain-containing protein 71L (235 aa).

Residues 1 to 13 show a composition bias toward basic residues; it reads MRRSMKRRRRRRP. A disordered region spans residues 1–30; it reads MRRSMKRRRRRRPVAPATAARGGDFRAEDG. Phosphoserine occurs at positions 52 and 89. The tract at residues 109–167 is disordered; it reads PDPPGPPTARGQARRPVPRAAARRRRRGARAAAARRRKPRPPPPPPPPPEESCPAKPVA. A compositionally biased stretch (basic residues) spans 120–148; it reads QARRPVPRAAARRRRRGARAAAARRRKPR. Over residues 149–159 the composition is skewed to pro residues; sequence PPPPPPPPPEE. T185 bears the Phosphothreonine mark. S198 carries the post-translational modification Phosphoserine.

In Homo sapiens (Human), this protein is Coiled-coil domain-containing protein 71L (CCDC71L).